A 693-amino-acid polypeptide reads, in one-letter code: Elongation factor G (693 aa).

One can recognise a tr-type G domain in the interval 8 to 282 (EKTRNIGIMA…AVIDYLPSPL (275 aa)). GTP-binding positions include 17-24 (AHVDAGKT), 81-85 (DTPGH), and 135-138 (NKMD).

Belongs to the TRAFAC class translation factor GTPase superfamily. Classic translation factor GTPase family. EF-G/EF-2 subfamily.

The protein resides in the cytoplasm. Catalyzes the GTP-dependent ribosomal translocation step during translation elongation. During this step, the ribosome changes from the pre-translocational (PRE) to the post-translocational (POST) state as the newly formed A-site-bound peptidyl-tRNA and P-site-bound deacylated tRNA move to the P and E sites, respectively. Catalyzes the coordinated movement of the two tRNA molecules, the mRNA and conformational changes in the ribosome. The chain is Elongation factor G from Streptococcus pneumoniae (strain P1031).